We begin with the raw amino-acid sequence, 497 residues long: Probable malate:quinone oxidoreductase (497 aa).

This sequence belongs to the MQO family. FAD is required as a cofactor.

The catalysed reaction is (S)-malate + a quinone = a quinol + oxaloacetate. It functions in the pathway carbohydrate metabolism; tricarboxylic acid cycle; oxaloacetate from (S)-malate (quinone route): step 1/1. The polypeptide is Probable malate:quinone oxidoreductase (Prochlorococcus marinus subsp. pastoris (strain CCMP1986 / NIES-2087 / MED4)).